A 117-amino-acid chain; its full sequence is MNNIIKMLNEEQMKTDVPQFGAGDTVVVKVRVVEGGKERLQAFEGIVIAKRNRGVHSAFTVRKISNGEGVERAFQTHSPIISSIEVKRRGRVRRAKLYYLRERSGKSARIREKLATK.

Belongs to the bacterial ribosomal protein bL19 family.

Its function is as follows. This protein is located at the 30S-50S ribosomal subunit interface and may play a role in the structure and function of the aminoacyl-tRNA binding site. This Shewanella pealeana (strain ATCC 700345 / ANG-SQ1) protein is Large ribosomal subunit protein bL19.